A 257-amino-acid chain; its full sequence is Imidazole glycerol phosphate synthase subunit HisF (257 aa).

Residues D11 and D130 contribute to the active site.

It belongs to the HisA/HisF family. In terms of assembly, heterodimer of HisH and HisF.

The protein localises to the cytoplasm. It carries out the reaction 5-[(5-phospho-1-deoxy-D-ribulos-1-ylimino)methylamino]-1-(5-phospho-beta-D-ribosyl)imidazole-4-carboxamide + L-glutamine = D-erythro-1-(imidazol-4-yl)glycerol 3-phosphate + 5-amino-1-(5-phospho-beta-D-ribosyl)imidazole-4-carboxamide + L-glutamate + H(+). It participates in amino-acid biosynthesis; L-histidine biosynthesis; L-histidine from 5-phospho-alpha-D-ribose 1-diphosphate: step 5/9. In terms of biological role, IGPS catalyzes the conversion of PRFAR and glutamine to IGP, AICAR and glutamate. The HisF subunit catalyzes the cyclization activity that produces IGP and AICAR from PRFAR using the ammonia provided by the HisH subunit. This Pseudoalteromonas atlantica (strain T6c / ATCC BAA-1087) protein is Imidazole glycerol phosphate synthase subunit HisF.